Consider the following 387-residue polypeptide: Exodeoxyribonuclease 7 large subunit (387 aa).

This sequence belongs to the XseA family. As to quaternary structure, heterooligomer composed of large and small subunits.

The protein localises to the cytoplasm. The enzyme catalyses Exonucleolytic cleavage in either 5'- to 3'- or 3'- to 5'-direction to yield nucleoside 5'-phosphates.. Bidirectionally degrades single-stranded DNA into large acid-insoluble oligonucleotides, which are then degraded further into small acid-soluble oligonucleotides. This chain is Exodeoxyribonuclease 7 large subunit, found in Campylobacter lari (strain RM2100 / D67 / ATCC BAA-1060).